The chain runs to 199 residues: dITP/XTP pyrophosphatase (199 aa).

8–13 is a binding site for substrate; that stretch reads SGNAGK. Asp-69 functions as the Proton acceptor in the catalytic mechanism. Position 69 (Asp-69) interacts with Mg(2+). Residues Ser-70, 154–157, Lys-177, and 182–183 each bind substrate; these read FGYN and HR.

It belongs to the HAM1 NTPase family. As to quaternary structure, homodimer. Requires Mg(2+) as cofactor.

The enzyme catalyses XTP + H2O = XMP + diphosphate + H(+). It carries out the reaction dITP + H2O = dIMP + diphosphate + H(+). It catalyses the reaction ITP + H2O = IMP + diphosphate + H(+). Functionally, pyrophosphatase that catalyzes the hydrolysis of nucleoside triphosphates to their monophosphate derivatives, with a high preference for the non-canonical purine nucleotides XTP (xanthosine triphosphate), dITP (deoxyinosine triphosphate) and ITP. Seems to function as a house-cleaning enzyme that removes non-canonical purine nucleotides from the nucleotide pool, thus preventing their incorporation into DNA/RNA and avoiding chromosomal lesions. The protein is dITP/XTP pyrophosphatase of Xylella fastidiosa (strain 9a5c).